The following is a 534-amino-acid chain: Putative fimbrium tip subunit Fim1C (534 aa).

Positions M1 to G21 are cleaved as a signal peptide. The N-palmitoyl cysteine moiety is linked to residue C22. C22 carries S-diacylglycerol cysteine lipidation. A propeptide spanning residues C22–R54 is cleaved from the precursor.

It belongs to the bacteroidetes fimbrillin superfamily. Mfa-like family. As to quaternary structure, may be part of the fimbrial tip.

The protein resides in the fimbrium. It localises to the cell outer membrane. Probably a component of the fimbrium tip. Fimbriae are filamentous appendages on the cell surface that mediate cell adhesion and biofilm formation. This is Putative fimbrium tip subunit Fim1C from Bacteroides ovatus (strain ATCC 8483 / DSM 1896 / JCM 5824 / BCRC 10623 / CCUG 4943 / NCTC 11153).